A 314-amino-acid chain; its full sequence is Homoserine O-succinyltransferase (314 aa).

Cys-142 (acyl-thioester intermediate) is an active-site residue. Residues Lys-163 and Ser-192 each contribute to the substrate site. The active-site Proton acceptor is His-235. Residue Glu-237 is part of the active site. Arg-249 serves as a coordination point for substrate.

The protein belongs to the MetA family.

It localises to the cytoplasm. The enzyme catalyses L-homoserine + succinyl-CoA = O-succinyl-L-homoserine + CoA. It participates in amino-acid biosynthesis; L-methionine biosynthesis via de novo pathway; O-succinyl-L-homoserine from L-homoserine: step 1/1. Functionally, transfers a succinyl group from succinyl-CoA to L-homoserine, forming succinyl-L-homoserine. The chain is Homoserine O-succinyltransferase from Shewanella woodyi (strain ATCC 51908 / MS32).